We begin with the raw amino-acid sequence, 494 residues long: Solute carrier family 2, facilitated glucose transporter member 3 (494 aa).

Over 1–10 (MGTTKVTPYL) the chain is Cytoplasmic. A helical membrane pass occupies residues 11 to 32 (IFATSVAAIGSFQFGYNTGVIN). Over 33-64 (APEMIIRDFLNYTLDEKLDEPPSRLLLTNLWS) the chain is Extracellular. N43 is a glycosylation site (N-linked (GlcNAc...) asparagine). A helical transmembrane segment spans residues 65 to 84 (LSVAIFSVGGMIGSFSVGLF). At 85–89 (NRFGR) the chain is on the cytoplasmic side. A helical membrane pass occupies residues 90-110 (RNSMLIVNLLAVIGGCLMGFC). The Extracellular segment spans residues 111–117 (KISESVE). Residues 118-141 (MLILGRLVIGVFCGLCTGFVPMYI) traverse the membrane as a helical segment. At 142–152 (GEISPTALRGA) the chain is on the cytoplasmic side. Residues 153–173 (FGTLNQLGIVIGILVAQIFGL) form a helical membrane-spanning segment. Position 158 (Q158) interacts with D-glucose. The Extracellular portion of the chain corresponds to 174-182 (EIILGSEVL). A helical membrane pass occupies residues 183–203 (WPVLLGFTIIPAILQSAALPF). Over 204–268 (CPESPRFLLI…LFRAPSYRQP (65 aa)) the chain is Cytoplasmic. T231 bears the Phosphothreonine mark. A helical transmembrane segment spans residues 269–289 (IIISIVLQLSQQLSGINAVFY). The segment at 276-278 (QLS) is important for selectivity against fructose. D-glucose-binding positions include 279–280 (QQ) and N285. At 290–303 (YSTGIFKDAGVKEP) the chain is on the extracellular side. The chain crosses the membrane as a helical span at residues 304–324 (IYATIGAGVVNTIFTIVSVFL). N314 is a binding site for D-glucose. Over 325–330 (VERAGR) the chain is Cytoplasmic. The helical transmembrane segment at 331-351 (RTLHLIGLGGMALCSVLMTVS) threads the bilayer. The Extracellular segment spans residues 352 to 362 (LLLKDKYDTMS). Residues 363-388 (LVCIAAILIYVAFFEIGPGPIPWFIV) form a helical membrane-spanning segment. Positions 377 and 385 each coordinate D-glucose. The Cytoplasmic segment spans residues 389 to 398 (AELFSQGPRP). Residues 399 to 419 (AAMAVAGCSNWTSNFLVGLLF) form a helical membrane-spanning segment. Topologically, residues 420–428 (PSAAYYLGA) are extracellular. The chain crosses the membrane as a helical span at residues 429–449 (YVFVIFAVFLVAFFIFTFFKV). At 450-494 (PETRGRTFEDITRAFEGQAAEANKLGKGPTMEMNSIQPIETTTHV) the chain is on the cytoplasmic side. S484 carries the post-translational modification Phosphoserine. Position 491 is a phosphothreonine (T491).

Belongs to the major facilitator superfamily. Sugar transporter (TC 2.A.1.1) family. Glucose transporter subfamily. In terms of assembly, interacts with SMIM43; the interaction may promote SLC2A3-mediated glucose transport to meet the energy needs of mesendoderm differentiation. Detected in stomach, placenta, lung and brain.

Its subcellular location is the cell membrane. It is found in the perikaryon. The protein localises to the cell projection. The catalysed reaction is D-glucose(out) = D-glucose(in). It carries out the reaction D-galactose(in) = D-galactose(out). Deoxyglucose transport is inhibited by D-glucose, D-galactose and maltose. Galactose transport is inhibited by D-glucose and maltose. Facilitative glucose transporter. Can also mediate the uptake of various other monosaccharides across the cell membrane. Mediates the uptake of glucose, 2-deoxyglucose, galactose, mannose, xylose and fucose, and probably also dehydroascorbate. Does not mediate fructose transport. Required for mesendoderm differentiation. This is Solute carrier family 2, facilitated glucose transporter member 3 from Oryctolagus cuniculus (Rabbit).